Reading from the N-terminus, the 722-residue chain is Protein HAPLESS 2-A (722 aa).

The signal sequence occupies residues 1–24 (MPRRRGTPLPTILLLLAFVGGACG). The Extracellular portion of the chain corresponds to 25 to 552 (TEILSKSRLE…LFDFGCHIQY (528 aa)). 7 disulfides stabilise this stretch: cysteine 36–cysteine 48, cysteine 129–cysteine 159, cysteine 141–cysteine 188, cysteine 160–cysteine 315, cysteine 162–cysteine 171, cysteine 298–cysteine 322, and cysteine 435–cysteine 473. Residues 553 to 573 (VCIGWILLLLLIPAAVVFLWL) traverse the membrane as a helical segment. Over 574–722 (LHQEGLFDPL…HRDGHYSPSV (149 aa)) the chain is Cytoplasmic. Positions 598-641 (RRRHQKGRHHRHHHDHRHRHGHSHGDHHHHYHGGHHQRRRHHHP) are enriched in basic residues. 2 disordered regions span residues 598-665 (RRRH…RNHH) and 680-722 (RLDR…SPSV). Over residues 646–662 (VEGHHHDRQQHSHEAGR) the composition is skewed to basic and acidic residues. The span at 701–711 (RRSRHERHGGH) shows a compositional bias: basic residues. Residues 712 to 722 (GHRDGHYSPSV) are compositionally biased toward basic and acidic residues.

The protein belongs to the HAP2/GCS1 family.

The protein resides in the endoplasmic reticulum membrane. It localises to the cell membrane. Its function is as follows. Required for male fertility. Plays a role in pollen tube guidance and successful gamete attachment. Essential for the fusion of gametes during double fertilization, where one male gamete fuses with the egg to produce a zygote, and another male gamete fuses with the central cell to produce the endosperm. Mediates the fusion of cell membranes. Not required for pollen tube outgrowth. The protein is Protein HAPLESS 2-A (HAP2A) of Oryza sativa subsp. japonica (Rice).